The chain runs to 612 residues: MPEYRSRTSTAGRNMAGARALWRATGMKDGDFHKPIIAIANSFTQFVPGHVHLKDLGQLVAREIEQVGGVAKEFNTIAVDDGIAMGHDGMLYSLPSREIIADAVEYMVNAHCADALVCISNCDKITPGMLMAALRLNIPVVFVSGGPMEAGKTKLSEHKLDLVDAMVVAADDSASDEKVAAFERSACPTCGSCSGMFTANSMNCLTEALGLSLPGNGTTLATHADREALFRRAGRLIVELCHRWYGGEDPSALPRGIATQAAFANAMTLDIAMGGSTNTILHLLAAAQEAEVDFDLTHIDALSRRVPQLCKVAPNTPKYHIEDVHRAGGVFGILGELDRAGLLETTVPTVHSASLADALERWDVVRSDNDTLHTFFKAGPAGIPTQEAFSQATRWPTLDVDRAEGCIRSLQHAYSLEGGLAVLRGNLAVDGCVVKTAGVDESIHVFEGPARVYESQDAAVAGILADEVQPGEVVVIRYEGPKGGPGMQEMLYPTSYLKSKGLGKQCALLTDGRFSGGTSGLSIGHVSPEAASGGVIGLVEDGDRIRIDIPARRIDLLLDEAVLAQRRSDADARGWKPRAPRPRKVTSALKAYALLATSADKGAVRNTALLGD.

Asp-81 serves as a coordination point for Mg(2+). [2Fe-2S] cluster is bound at residue Cys-122. Residues Asp-123 and Lys-124 each coordinate Mg(2+). N6-carboxylysine is present on Lys-124. Residue Cys-193 participates in [2Fe-2S] cluster binding. Glu-489 contacts Mg(2+). Ser-515 (proton acceptor) is an active-site residue.

Belongs to the IlvD/Edd family. Homodimer. Requires [2Fe-2S] cluster as cofactor. It depends on Mg(2+) as a cofactor.

It carries out the reaction (2R)-2,3-dihydroxy-3-methylbutanoate = 3-methyl-2-oxobutanoate + H2O. The catalysed reaction is (2R,3R)-2,3-dihydroxy-3-methylpentanoate = (S)-3-methyl-2-oxopentanoate + H2O. Its pathway is amino-acid biosynthesis; L-isoleucine biosynthesis; L-isoleucine from 2-oxobutanoate: step 3/4. The protein operates within amino-acid biosynthesis; L-valine biosynthesis; L-valine from pyruvate: step 3/4. Functions in the biosynthesis of branched-chain amino acids. Catalyzes the dehydration of (2R,3R)-2,3-dihydroxy-3-methylpentanoate (2,3-dihydroxy-3-methylvalerate) into 2-oxo-3-methylpentanoate (2-oxo-3-methylvalerate) and of (2R)-2,3-dihydroxy-3-methylbutanoate (2,3-dihydroxyisovalerate) into 2-oxo-3-methylbutanoate (2-oxoisovalerate), the penultimate precursor to L-isoleucine and L-valine, respectively. This chain is Dihydroxy-acid dehydratase, found in Stenotrophomonas maltophilia (strain K279a).